Here is a 183-residue protein sequence, read N- to C-terminus: MTKQPEDWLDDVPGDDIEDEDDEIIWVSKSEIKRDAEELKRLGAEIVDLGKNALDKIPLDADLRPAIELAQRIKMEGRRRQLQLIGKMLRQRDVEPIRQALDKLKNRHNQQVVLFHKLENLRDRLIDQGDDAIAEVLNLWPDADRQQLRTLIRNAKKEKEGNKPPKSARQIFQYLRELAENEG.

The protein belongs to the DarP family.

The protein resides in the cytoplasm. Functionally, member of a network of 50S ribosomal subunit biogenesis factors which assembles along the 30S-50S interface, preventing incorrect 23S rRNA structures from forming. Promotes peptidyl transferase center (PTC) maturation. The chain is Dual-action ribosomal maturation protein DarP from Shigella flexneri serotype 5b (strain 8401).